The sequence spans 747 residues: Myotubularin-related protein 12 (747 aa).

The region spanning 205–643 (FDTPKDWCWE…PEIKVWAQRY (439 aa)) is the Myotubularin phosphatase domain. The interval 449-558 (VPIFLLFLDC…RGQQKGSRFK (110 aa)) is interaction with MTM1. Residues 548-575 (DRGQQKGSRFKHQRQLSLPLTQSKSSPK) are disordered. Polar residues predominate over residues 562 to 572 (QLSLPLTQSKS). Phosphoserine occurs at positions 564 and 601.

Belongs to the protein-tyrosine phosphatase family. Non-receptor class myotubularin subfamily. As to quaternary structure, heterodimer with lipid phosphatase MTM1. Heterodimer with lipid phosphatase MTMR2. In terms of tissue distribution, expressed in skeletal muscles (at protein level).

Its subcellular location is the cytoplasm. It localises to the sarcoplasmic reticulum. The protein resides in the myofibril. It is found in the sarcomere. Its function is as follows. Acts as an adapter for the myotubularin-related phosphatases. Regulates phosphatase MTM1 protein stability and possibly its intracellular location. By stabilizing MTM1 protein levels, required for skeletal muscle maintenance but not for myogenesis. The protein is Myotubularin-related protein 12 (Mtmr12) of Mus musculus (Mouse).